A 520-amino-acid chain; its full sequence is GMP synthase [glutamine-hydrolyzing] (520 aa).

Positions 9–202 (SVLIVDFGSQ…IHNVAGIKGD (194 aa)) constitute a Glutamine amidotransferase type-1 domain. Residue Cys-86 is the Nucleophile of the active site. Catalysis depends on residues His-176 and Glu-178. Positions 203 to 395 (WSMSAYRQKA…LGLPDSFIGR (193 aa)) constitute a GMPS ATP-PPase domain. 230–236 (SGGVDSS) contributes to the ATP binding site.

As to quaternary structure, homodimer.

It carries out the reaction XMP + L-glutamine + ATP + H2O = GMP + L-glutamate + AMP + diphosphate + 2 H(+). It functions in the pathway purine metabolism; GMP biosynthesis; GMP from XMP (L-Gln route): step 1/1. In terms of biological role, catalyzes the synthesis of GMP from XMP. The protein is GMP synthase [glutamine-hydrolyzing] of Rhizobium etli (strain ATCC 51251 / DSM 11541 / JCM 21823 / NBRC 15573 / CFN 42).